Consider the following 378-residue polypeptide: Transmembrane protein adipocyte-associated 1 homolog (378 aa).

N-linked (GlcNAc...) asparagine glycosylation is found at asparagine 16, asparagine 25, and asparagine 36. The next 7 helical transmembrane spans lie at 61 to 81 (VMLLIPNVAFLVFLMWKLPSA), 88 to 108 (TSSPIFVAFYILVFVVAAVGI), 136 to 156 (FFLLAIELSVIILGLAFGHLE), 164 to 184 (VLAITAVLSLAYSITQGTLEI), 205 to 225 (HFWLASSCFFFLVYSLIVILP), 247 to 267 (ILALLNLVQGLGSALLCADII), and 278 to 298 (FLYFSVFAPLIYVTFLKGFFG). The tract at residues 316–335 (DSDVHLPHTSSSGLGRKDLD) is disordered.

It belongs to the UPF0359 family.

It is found in the membrane. In Danio rerio (Zebrafish), this protein is Transmembrane protein adipocyte-associated 1 homolog (tpra1).